The sequence spans 83 residues: SPPVCGNELLEEGEECDCGSPANCQDRCCNAATCKLTPGSQCSYGECCDQCKFKKARTVCRIARGDWNDDYCTGKSSDCPWNH.

Positions 2 to 83 (PPVCGNELLE…GKSSDCPWNH (82 aa)) constitute a Disintegrin domain. Cystine bridges form between Cys-5/Cys-24, Cys-16/Cys-34, Cys-18/Cys-29, Cys-28/Cys-51, Cys-42/Cys-48, Cys-47/Cys-72, and Cys-60/Cys-79. Positions 64–66 (RGD) match the Cell attachment site motif.

This sequence belongs to the venom metalloproteinase (M12B) family. P-II subfamily. P-IIa sub-subfamily. Monomer (disintegrin). As to expression, expressed by the venom gland.

Its subcellular location is the secreted. Its function is as follows. Inhibits fibrinogen interaction with platelets. Acts by binding to alpha-IIb/beta-3 (ITGA2B/ITGB3) on the platelet surface and inhibits aggregation induced by ADP, thrombin, platelet-activating factor and collagen. The chain is Disintegrin isoform D-3 from Bitis arietans (African puff adder).